The primary structure comprises 391 residues: Isocitrate dehydrogenase [NADP] (391 aa).

5 residues coordinate D-threo-isocitrate: serine 102, asparagine 104, arginine 108, arginine 118, and arginine 142. Mg(2+) is bound at residue aspartate 283.

This sequence belongs to the isocitrate and isopropylmalate dehydrogenases family. In terms of assembly, homodimer. It depends on Mg(2+) as a cofactor. Requires Mn(2+) as cofactor.

The catalysed reaction is D-threo-isocitrate + NADP(+) = 2-oxoglutarate + CO2 + NADPH. Its function is as follows. Catalyzes the oxidative decarboxylation of isocitrate to 2-oxoglutarate and carbon dioxide with the concomitant reduction of NADP(+). This chain is Isocitrate dehydrogenase [NADP] (icd), found in Streptococcus salivarius.